The following is a 259-amino-acid chain: Ras-related protein Rab-34 (259 aa).

Met-1 carries the N-acetylmethionine modification. GTP-binding residues include Ser-62, Val-63, Gly-64, Lys-65, Thr-66, Asp-78, Tyr-81, and Thr-84. Thr-66 lines the Mg(2+) pocket. The Switch 1 motif lies at 71-89 (RFCKDTFDKNYKATIGVDF). Mg(2+)-binding residues include Thr-84 and Asp-107. A Switch 2 motif is present at residues 108–127 (TAGQERFKCIASTYYRGAQA). Residues Gly-110, Lys-167, Asp-169, and Ser-198 each coordinate GTP. Ser-241 bears the Phosphoserine mark. Residues Cys-257 and Cys-258 are each lipidated (S-geranylgeranyl cysteine).

Belongs to the small GTPase superfamily. Rab family. As to quaternary structure, interacts with RILP. The GTP-bound form interacts with REP15. The cofactor is Mg(2+).

The protein localises to the cytoplasm. It localises to the golgi apparatus. Its subcellular location is the cytoplasmic vesicle. It is found in the phagosome. The protein resides in the phagosome membrane. The protein localises to the cell projection. It localises to the cilium. Its subcellular location is the cytoskeleton. It is found in the microtubule organizing center. The protein resides in the centrosome. The protein localises to the centriole. The enzyme catalyses GTP + H2O = GDP + phosphate + H(+). Its activity is regulated as follows. Regulated by guanine nucleotide exchange factors (GEFs) which promote the exchange of bound GDP for free GTP. Regulated by GTPase activating proteins (GAPs) which increase the GTP hydrolysis activity. Inhibited by GDP dissociation inhibitors (GDIs). Its function is as follows. The small GTPases Rab are key regulators of intracellular membrane trafficking, from the formation of transport vesicles to their fusion with membranes. Rabs cycle between an inactive GDP-bound form and an active GTP-bound form that is able to recruit to membranes different sets of downstream effectors directly responsible for vesicle formation, movement, tethering and fusion. RAB34 transports protein involved in the redistribution of lysosomes to the peri-Golgi region. Plays a role in the maturation of phagosomes that engulf pathogens, such as S.aureus and M.tuberculosis. Plays a role in the fusion of phagosomes with lysosomes. Involved in ciliogenesis. In particular, it is required for early steps of the intracellular cilium assembly pathway initiated by trafficking and docking of ciliary vesicles to the centrioles in the cytoplasm, followed by axoneme formation in the cytoplasm. After axoneme elongation, the centrioles migrate close to the cell surface so that ciliary vesicles can fuse with the plasma membrane to expose cilia to the extracellular space. It seems dispensable for ciliogenesis via the extracellular pathway where cilium assembly begins after migration and docking of the centriole to the plasma membrane. Also acts as a positive regulator of hedgehog signaling and regulates ciliary function. The sequence is that of Ras-related protein Rab-34 from Rattus norvegicus (Rat).